The following is a 510-amino-acid chain: 2,3-bisphosphoglycerate-independent phosphoglycerate mutase (510 aa).

Mn(2+) contacts are provided by D14 and S64. Residue S64 is the Phosphoserine intermediate of the active site. Substrate-binding positions include H125, 155–156, R187, R193, 259–262, and K332; these read RD and RADR. Mn(2+)-binding residues include D399, H403, D440, H441, and H459.

This sequence belongs to the BPG-independent phosphoglycerate mutase family. As to quaternary structure, monomer. Mn(2+) serves as cofactor.

It catalyses the reaction (2R)-2-phosphoglycerate = (2R)-3-phosphoglycerate. It functions in the pathway carbohydrate degradation; glycolysis; pyruvate from D-glyceraldehyde 3-phosphate: step 3/5. Its function is as follows. Catalyzes the interconversion of 2-phosphoglycerate and 3-phosphoglycerate. The chain is 2,3-bisphosphoglycerate-independent phosphoglycerate mutase from Pseudomonas syringae pv. syringae (strain B728a).